Consider the following 255-residue polypeptide: NAD kinase (255 aa).

Residue aspartate 44 is the Proton acceptor of the active site. Residues aspartate 44 to glycine 45, histidine 49, asparagine 114 to glutamate 115, aspartate 144, alanine 152, serine 155 to serine 160, and glutamine 216 contribute to the NAD(+) site.

The protein belongs to the NAD kinase family. A divalent metal cation is required as a cofactor.

It is found in the cytoplasm. The catalysed reaction is NAD(+) + ATP = ADP + NADP(+) + H(+). Involved in the regulation of the intracellular balance of NAD and NADP, and is a key enzyme in the biosynthesis of NADP. Catalyzes specifically the phosphorylation on 2'-hydroxyl of the adenosine moiety of NAD to yield NADP. This chain is NAD kinase, found in Rickettsia canadensis (strain McKiel).